A 127-amino-acid polypeptide reads, in one-letter code: Ribosome-binding factor A (127 aa).

It belongs to the RbfA family. Monomer. Binds 30S ribosomal subunits, but not 50S ribosomal subunits or 70S ribosomes.

It is found in the cytoplasm. In terms of biological role, one of several proteins that assist in the late maturation steps of the functional core of the 30S ribosomal subunit. Associates with free 30S ribosomal subunits (but not with 30S subunits that are part of 70S ribosomes or polysomes). Required for efficient processing of 16S rRNA. May interact with the 5'-terminal helix region of 16S rRNA. This chain is Ribosome-binding factor A, found in Aromatoleum aromaticum (strain DSM 19018 / LMG 30748 / EbN1) (Azoarcus sp. (strain EbN1)).